Here is a 969-residue protein sequence, read N- to C-terminus: MAGKARVHELAKELGVTSKELLATLKEQGEFVKSASSTVEAPVARRLRESFASKSAPANGAKPGPAASARPGAKPTPGGPRPGPRTPAPAASAPQAPAEQTARPTDARPGPAVKPGPAPTPARPAAPEAPAAKAAPEAPAQRPTPGGPRPGQQQQRPGAPAQGGPRPGPKPGPKTPRVGNNPYSSQPAPERERPAARPGPGGPRPGPAQGGPRPGPGQGAPRPGATPGPRPAAAQGGPRPGGPRPSPGSMPPRPNPGAMPQRTPRPGPSAGGRPGRPGGAPGAGRPGGGGGGYRGGGGAPGAGAGAPAGGGFRGRPGGGGGRPGGPGGRGGAAGAFGRPGGAPRRGRKSKRQKRQEYDSMQAPSVGGVRLPRGNGEIIRLARGASLSDFAEKIDANPAALVQALFNLGEMVTATQSVNDETLELLGSEMNYVVQVVSPEDEDRELLESFDLTYGEDEGDEDDLQVRPPVVTVMGHVDHGKTRLLDTIRKANVREGEAGGITQHIGAYQVMTHLGDEDRLITFIDTPGHEAFTAMRARGAKATDIAILVVAADDGVMPQTVEAINHAQAADVPIVVAVNKIDKEGANPEKIRQQLTEYGLVAEEYGGDTMFVDISAKQGTNIDALLEAVLLTADAALDLRANPNMDAQGVAIEAHLDRGRGPVATVLIQRGTLRVGDSIVAGDAYGRVRRMVDEHGEDVEAALPSRPVQVVGFTSVPGAGDNLLVVDEDRIARQIADRRNARKRNALAARSRKRISLEDLDAALKETSELNLILKGDNAGTVEALEEALMGIEVGDEVRLRVIDRGVGGVTETNVNLASASNAIIIGFNVRAEGKATELANREGVDIRYYSVIYQAIDEIEKALKGMLKPIYEEVELGRAEIRAIFRSSKVGNIAGCMVLSGSVKRNAKARLLRDNVVVAETTTISSLRREKDDVTEVREGFECGMTLTYNDIKEGDIIEAYELREKPRD.

Residues 50 to 370 are disordered; sequence SFASKSAPAN…QAPSVGGVRL (321 aa). Over residues 54 to 76 the composition is skewed to low complexity; that stretch reads KSAPANGAKPGPAASARPGAKPT. The segment covering 77–87 has biased composition (pro residues); that stretch reads PGGPRPGPRTP. Residues 88–102 are compositionally biased toward low complexity; that stretch reads APAASAPQAPAEQTA. Over residues 112–124 the composition is skewed to pro residues; sequence AVKPGPAPTPARP. The segment covering 125 to 164 has biased composition (low complexity); that stretch reads AAPEAPAAKAAPEAPAQRPTPGGPRPGQQQQRPGAPAQGG. Over residues 240–267 the composition is skewed to pro residues; sequence PGGPRPSPGSMPPRPNPGAMPQRTPRPG. A compositionally biased stretch (gly residues) spans 269 to 340; it reads SAGGRPGRPG…GAAGAFGRPG (72 aa). Residues 344-353 show a composition bias toward basic residues; sequence RRGRKSKRQK. Residues 465-636 enclose the tr-type G domain; that stretch reads VRPPVVTVMG…AVLLTADAAL (172 aa). The segment at 474 to 481 is G1; that stretch reads GHVDHGKT. Residue 474 to 481 coordinates GTP; the sequence is GHVDHGKT. The G2 stretch occupies residues 499–503; sequence GITQH. Residues 524 to 527 form a G3 region; the sequence is DTPG. Residues 524 to 528 and 578 to 581 contribute to the GTP site; these read DTPGH and NKID. Residues 578 to 581 are G4; it reads NKID. Residues 614-616 form a G5 region; it reads SAK.

Belongs to the TRAFAC class translation factor GTPase superfamily. Classic translation factor GTPase family. IF-2 subfamily.

The protein resides in the cytoplasm. One of the essential components for the initiation of protein synthesis. Protects formylmethionyl-tRNA from spontaneous hydrolysis and promotes its binding to the 30S ribosomal subunits. Also involved in the hydrolysis of GTP during the formation of the 70S ribosomal complex. In Nocardia farcinica (strain IFM 10152), this protein is Translation initiation factor IF-2.